We begin with the raw amino-acid sequence, 263 residues long: MNTGFTAIIADDEPLLRHHLDKSLAEVWPELDIVAKVADGEQALLAIEQSQPDIAFLDIRMPVLDGMSLAQKLNRLANPPLIVFVTAYDDYAIKAFEQNAADYLLKPISDARLQTTCERVKARLSQRGSDNSHVQMNSLLEQLQQLSAPQTPQYLQWIKATQGDDIHLIATSDVLYFKAEEKYVSVYAQQGKGEVQEYLIRTSLKELIGQLNPEQFWQVHRSSVVQVSKISKVNKDFAGRMFVYVGETKLPVSRASQSLFKGM.

The Response regulatory domain occupies 6 to 121 (TAIIADDEPL…RLQTTCERVK (116 aa)). The residue at position 58 (Asp-58) is a 4-aspartylphosphate. Residues 158 to 263 (IKATQGDDIH…RASQSLFKGM (106 aa)) form the HTH LytTR-type domain.

This is an uncharacterized protein from Vibrio parahaemolyticus serotype O3:K6 (strain RIMD 2210633).